The chain runs to 488 residues: Ribulose bisphosphate carboxylase large chain (488 aa).

Residues asparagine 127 and threonine 177 each coordinate substrate. Catalysis depends on lysine 179, which acts as the Proton acceptor. Position 181 (lysine 181) interacts with substrate. The Mg(2+) site is built by lysine 205, aspartate 207, and glutamate 208. N6-carboxylysine is present on lysine 205. The Proton acceptor role is filled by histidine 297. Positions 298, 330, and 382 each coordinate substrate.

Belongs to the RuBisCO large chain family. Type I subfamily. As to quaternary structure, heterohexadecamer of 8 large chains and 8 small chains. Mg(2+) serves as cofactor.

The protein resides in the plastid. The protein localises to the chloroplast. It catalyses the reaction 2 (2R)-3-phosphoglycerate + 2 H(+) = D-ribulose 1,5-bisphosphate + CO2 + H2O. The catalysed reaction is D-ribulose 1,5-bisphosphate + O2 = 2-phosphoglycolate + (2R)-3-phosphoglycerate + 2 H(+). Functionally, ruBisCO catalyzes two reactions: the carboxylation of D-ribulose 1,5-bisphosphate, the primary event in carbon dioxide fixation, as well as the oxidative fragmentation of the pentose substrate in the photorespiration process. Both reactions occur simultaneously and in competition at the same active site. The polypeptide is Ribulose bisphosphate carboxylase large chain (Pylaiella littoralis (Seaweed)).